Consider the following 93-residue polypeptide: Small ribosomal subunit protein uS19 (93 aa).

The protein belongs to the universal ribosomal protein uS19 family.

In terms of biological role, protein S19 forms a complex with S13 that binds strongly to the 16S ribosomal RNA. The protein is Small ribosomal subunit protein uS19 of Campylobacter hominis (strain ATCC BAA-381 / DSM 21671 / CCUG 45161 / LMG 19568 / NCTC 13146 / CH001A).